Here is a 243-residue protein sequence, read N- to C-terminus: Ubiquinone/menaquinone biosynthesis C-methyltransferase UbiE (243 aa).

Residues Thr69, Asp90, and 116-117 each bind S-adenosyl-L-methionine; that span reads DA.

This sequence belongs to the class I-like SAM-binding methyltransferase superfamily. MenG/UbiE family.

The enzyme catalyses a 2-demethylmenaquinol + S-adenosyl-L-methionine = a menaquinol + S-adenosyl-L-homocysteine + H(+). It carries out the reaction a 2-methoxy-6-(all-trans-polyprenyl)benzene-1,4-diol + S-adenosyl-L-methionine = a 5-methoxy-2-methyl-3-(all-trans-polyprenyl)benzene-1,4-diol + S-adenosyl-L-homocysteine + H(+). It functions in the pathway quinol/quinone metabolism; menaquinone biosynthesis; menaquinol from 1,4-dihydroxy-2-naphthoate: step 2/2. Its pathway is cofactor biosynthesis; ubiquinone biosynthesis. Functionally, methyltransferase required for the conversion of demethylmenaquinol (DMKH2) to menaquinol (MKH2) and the conversion of 2-polyprenyl-6-methoxy-1,4-benzoquinol (DDMQH2) to 2-polyprenyl-3-methyl-6-methoxy-1,4-benzoquinol (DMQH2). In Ralstonia pickettii (strain 12J), this protein is Ubiquinone/menaquinone biosynthesis C-methyltransferase UbiE.